The primary structure comprises 566 residues: Chondroitin sulfate proteoglycan 5 (566 aa).

The first 30 residues, 1 to 30, serve as a signal peptide directing secretion; sequence MGRAGGGGPDWGPPPVLLLLGVTLVLTAGA. Topologically, residues 31-423 are extracellular; sequence VPARETGSAI…SIITDFQVMC (393 aa). O-linked (Xyl...) (chondroitin sulfate) serine glycosylation occurs at Ser-38. The disordered stretch occupies residues 56–93; the sequence is ANDTREEAGLPAAGEDETSWTERGSEMAAVGPGVGPEE. Asn-57 carries an N-linked (GlcNAc...) asparagine glycan. The O-linked (GalNAc...) threonine glycan is linked to Thr-76. Residue Ser-123 is glycosylated (O-linked (Xyl...) (chondroitin sulfate) serine). Thr-132 carries an O-linked (GalNAc...) threonine glycan. 3 disordered regions span residues 137 to 173, 218 to 249, and 263 to 327; these read DEALGSSTMPPAIPEATETSGPPSPAVHDKPSVGPEL, DSEGRGADMGSFPGSPGTSENHPDTEGETPSW, and ESDF…PPQH. A glycan (O-linked (GalNAc...) serine) is linked at Ser-143. O-linked (GalNAc...) threonine glycosylation is found at Thr-144, Thr-153, and Thr-155. O-linked (GalNAc...) serine glycosylation is found at Ser-156 and Ser-160. The segment covering 163–173 has biased composition (basic and acidic residues); it reads VHDKPSVGPEL. Thr-235 carries an O-linked (GalNAc...) threonine glycan. Residues 265 to 301 are interaction with TNC and TNR; it reads DFYPTTSFYDDLEEEEEEEEDKDTVGGGDLEDENDLL. Positions 274 to 286 are enriched in acidic residues; that stretch reads DDLEEEEEEEEDK. Residues Asn-355 and Asn-367 are each glycosylated (N-linked (GlcNAc...) asparagine). In terms of domain architecture, EGF-like spans 371 to 413; that stretch reads RSVCDLFPSYCHNGGQCYLVENIGAFCRCNTQDYIWHKGMRCE. Disulfide bonds link Cys-374-Cys-387, Cys-381-Cys-397, and Cys-399-Cys-412. Gly-394 and Phe-396 each carry phosphoserine. Cys-397 is subject to Phosphothreonine. The chain crosses the membrane as a helical span at residues 424-444; that stretch reads VAVGSAALVLLLLFMMTVFFA. The interaction with GOPC stretch occupies residues 442-460; it reads FFAKKLYLLKTENTKLRRT. Residues 445–566 lie on the Cytoplasmic side of the membrane; it reads KKLYLLKTEN…GVNCLQNNLT (122 aa). Phosphoserine is present on residues Ser-467, Ser-475, and Ser-477. Position 478 is a phosphothreonine (Thr-478). A phosphoserine mark is found at Ser-483 and Ser-543. The interval 531-566 is disordered; that stretch reads KEEESFNIQNSMSPKLEGGKGDQDDLGVNCLQNNLT.

In terms of assembly, binds TNR and probably TNC. Interacts with ERBB3 and GOPC. Interacts with MDK; this interaction is independent of the presence of chondroitin sulfate chains and promotes elongation of oligodendroglial precursor-like cells. N-glycosylated. In terms of processing, O-glycosylated; contains chondroitin sulfate glycans. Part-time proteoglycan, expressed in part as a proteoglycan exhibiting chondroitin sulfate glycans and in part as a non-proteoglycan form. The relative amount of both forms depends on tissues and tissue maturation. In the cerebellum the 2 forms coexist while in the cerebrum the proteoglycan form is predominant. Post-translationally, phosphorylated; in intracellular and extracellular parts. Expressed in olfactory bulb, hippocampus, brain stem, spinal cord, cerebrum and cerebellum. Expressed by Purkinje cells in the cerebellum (at protein level). Expressed in immature and mature cerebellum (isoform 1, isoform 2 and isoform 3).

The protein resides in the cell membrane. Its subcellular location is the synaptic cell membrane. It localises to the endoplasmic reticulum membrane. The protein localises to the golgi apparatus membrane. It is found in the cell surface. The protein resides in the secreted. In terms of biological role, may function as a growth and differentiation factor involved in neuritogenesis. May induce ERBB3 activation. The chain is Chondroitin sulfate proteoglycan 5 (Cspg5) from Mus musculus (Mouse).